Here is a 189-residue protein sequence, read N- to C-terminus: Interferon alpha-B (189 aa).

Residues 1-23 form the signal peptide; the sequence is MAPAWSFLLALLLLSCNAICSLG. 2 disulfides stabilise this stretch: C24/C122 and C52/C162.

The protein belongs to the alpha/beta interferon family.

Its subcellular location is the secreted. In terms of biological role, produced by macrophages, IFN-alpha have antiviral activities. Interferon stimulates the production of two enzymes: a protein kinase and an oligoadenylate synthetase. This Bos taurus (Bovine) protein is Interferon alpha-B (IFNAB).